Reading from the N-terminus, the 494-residue chain is Maintenance of mitochondrial morphology protein 1 (494 aa).

The Lumenal portion of the chain corresponds to 1–22; it reads MSSQPGDPATLPAQSSLSFTQG. Residues 23-43 form a helical membrane-spanning segment; the sequence is FLLGQLSVVLVLAAFIKFFIF. The Cytoplasmic portion of the chain corresponds to 44–494; that stretch reads GEAPPPPSRG…GSLPEAVTPG (451 aa). Disordered stretches follow at residues 50–98, 274–330, 398–426, and 449–494; these read PSRG…SSST, PPLD…KSNV, VRTG…ARHE, and VASR…VTPG. Over residues 54–64 the composition is skewed to basic residues; sequence LSHRSATHRRS. 2 stretches are compositionally biased toward polar residues: residues 65–76 and 85–98; these read NSIYSNSPQEAG and STSN…SSST. Residues 130-387 form the SMP-LTD domain; it reads QPESLDWFNV…EPRVQVVGLP (258 aa). The span at 274–286 shows a compositional bias: pro residues; it reads PPLDTPSHSPSPP. Composition is skewed to polar residues over residues 406–416 and 466–477; these read TASNGPRSTVS and RSMTRQESSGDL.

Belongs to the MMM1 family. As to quaternary structure, homodimer. Component of the ER-mitochondria encounter structure (ERMES) or MDM complex, composed of mmm1, mdm10, mdm12 and mdm34. A mmm1 homodimer associates with one molecule of mdm12 on each side in a pairwise head-to-tail manner, and the SMP-LTD domains of mmm1 and mdm12 generate a continuous hydrophobic tunnel for phospholipid trafficking.

The protein localises to the endoplasmic reticulum membrane. Its function is as follows. Component of the ERMES/MDM complex, which serves as a molecular tether to connect the endoplasmic reticulum (ER) and mitochondria. Components of this complex are involved in the control of mitochondrial shape and protein biogenesis, and function in nonvesicular lipid trafficking between the ER and mitochondria. The mdm12-mmm1 subcomplex functions in the major beta-barrel assembly pathway that is responsible for biogenesis of all outer membrane beta-barrel proteins, and acts in a late step after the SAM complex. The mdm10-mdm12-mmm1 subcomplex further acts in the TOM40-specific pathway after the action of the mdm12-mmm1 complex. Essential for establishing and maintaining the structure of mitochondria and maintenance of mtDNA nucleoids. The chain is Maintenance of mitochondrial morphology protein 1 from Aspergillus clavatus (strain ATCC 1007 / CBS 513.65 / DSM 816 / NCTC 3887 / NRRL 1 / QM 1276 / 107).